Here is a 204-residue protein sequence, read N- to C-terminus: MKNKVRVPFSPDHPLCAPKLFTISAPAGAGKTTLVRMLAREFPDSFQKTLSLTTRAPRPEEIPGVDYQFVSQEEFQRRLDNEDFLEWVALFGEYYGTSRLGIDEIWKSGRHAVAVIDVEGALVLQSKIPTVAIFISAPSQEELERRLKQRGSEQDTQRQERLQHSLIEQAAADKFEYVIINDDLEKSYEVLKSIFIAEEHRNVL.

In terms of domain architecture, Guanylate kinase-like spans 18-196 (PKLFTISAPA…SYEVLKSIFI (179 aa)). 25-32 (APAGAGKT) is an ATP binding site.

This sequence belongs to the guanylate kinase family.

The protein resides in the cytoplasm. It carries out the reaction GMP + ATP = GDP + ADP. In terms of biological role, essential for recycling GMP and indirectly, cGMP. This is Guanylate kinase from Chlamydia abortus (strain DSM 27085 / S26/3) (Chlamydophila abortus).